An 82-amino-acid chain; its full sequence is Delta-conotoxin-like SmVIA (82 aa).

Residues 1–22 (MKLTCVMIVAVLFLIAWTFVTA) form the signal peptide. Residues 23-49 (DDSRNGLKNLFPKARHEMKNPEASKLN) constitute a propeptide that is removed on maturation. Cystine bridges form between Cys54/Cys69, Cys61/Cys73, and Cys68/Cys77. Residue Pro65 is modified to 4-hydroxyproline.

It belongs to the conotoxin O1 superfamily. As to expression, expressed by the venom duct.

Its subcellular location is the secreted. Functionally, delta-conotoxins bind to site 6 of voltage-gated sodium channels (Nav) and inhibit the inactivation process. This chain is Delta-conotoxin-like SmVIA, found in Conus stercusmuscarum (Fly-specked cone).